Here is a 319-residue protein sequence, read N- to C-terminus: Malate dehydrogenase (319 aa).

Residues 7–13 and Asp34 each bind NAD(+); that span reads GAAGGIG. Substrate-binding residues include Arg81 and Arg87. NAD(+) is bound by residues Asn94 and 117 to 119; that span reads ITN. Residues Asn119 and Arg153 each contribute to the substrate site. The active-site Proton acceptor is the His177. Met227 lines the NAD(+) pocket.

It belongs to the LDH/MDH superfamily. MDH type 1 family. Homodimer.

The catalysed reaction is (S)-malate + NAD(+) = oxaloacetate + NADH + H(+). Its function is as follows. Catalyzes the reversible oxidation of malate to oxaloacetate. In Psychromonas ingrahamii (strain DSM 17664 / CCUG 51855 / 37), this protein is Malate dehydrogenase.